The following is a 191-amino-acid chain: Auxin-responsive protein IAA32 (191 aa).

The EAR-like (transcriptional repression) motif lies at Leu-32–Leu-36. A PB1 domain is found at Tyr-98 to Arg-184.

The protein belongs to the Aux/IAA family. As to quaternary structure, homodimers and heterodimers.

The protein localises to the nucleus. Its function is as follows. Aux/IAA proteins are short-lived transcriptional factors that function as repressors of early auxin response genes at low auxin concentrations. Repression is thought to result from the interaction with auxin response factors (ARFs), proteins that bind to the auxin-responsive promoter element (AuxRE). Formation of heterodimers with ARF proteins may alter their ability to modulate early auxin response genes expression. In Arabidopsis thaliana (Mouse-ear cress), this protein is Auxin-responsive protein IAA32.